Here is a 307-residue protein sequence, read N- to C-terminus: Nucleotide-binding protein Achl_1824 (307 aa).

30–37 (GMSGAGRS) lines the ATP pocket. 81-84 (DVRS) is a binding site for GTP.

It belongs to the RapZ-like family.

In terms of biological role, displays ATPase and GTPase activities. In Pseudarthrobacter chlorophenolicus (strain ATCC 700700 / DSM 12829 / CIP 107037 / JCM 12360 / KCTC 9906 / NCIMB 13794 / A6) (Arthrobacter chlorophenolicus), this protein is Nucleotide-binding protein Achl_1824.